We begin with the raw amino-acid sequence, 326 residues long: Eukaryotic translation initiation factor 3 subunit I (326 aa).

WD repeat units lie at residues 8–47 (GHER…RLGT), 50–89 (GHQG…VIAS), 145–184 (MTES…KVVD), 188–227 (DHSA…CLKT), and 285–326 (GHFG…NIFE).

Belongs to the eIF-3 subunit I family. Component of the eukaryotic translation initiation factor 3 (eIF-3) complex. The eIF-3 complex interacts with pix.

The protein localises to the cytoplasm. In terms of biological role, component of the eukaryotic translation initiation factor 3 (eIF-3) complex, which is involved in protein synthesis of a specialized repertoire of mRNAs and, together with other initiation factors, stimulates binding of mRNA and methionyl-tRNAi to the 40S ribosome. The eIF-3 complex specifically targets and initiates translation of a subset of mRNAs involved in cell proliferation. The sequence is that of Eukaryotic translation initiation factor 3 subunit I from Drosophila simulans (Fruit fly).